Consider the following 380-residue polypeptide: Queuine tRNA-ribosyltransferase (380 aa).

Aspartate 96 (proton acceptor) is an active-site residue. Substrate-binding positions include 96 to 100, aspartate 150, glutamine 193, and glycine 220; that span reads DSGGF. An RNA binding region spans residues 251–257; it reads GVGAPDS. The Nucleophile role is filled by aspartate 270. Residues 275-279 form an RNA binding; important for wobble base 34 recognition region; it reads TRIAR. The Zn(2+) site is built by cysteine 308, cysteine 310, cysteine 313, and histidine 339.

Belongs to the queuine tRNA-ribosyltransferase family. Homodimer. Within each dimer, one monomer is responsible for RNA recognition and catalysis, while the other monomer binds to the replacement base PreQ1. The cofactor is Zn(2+).

It catalyses the reaction 7-aminomethyl-7-carbaguanine + guanosine(34) in tRNA = 7-aminomethyl-7-carbaguanosine(34) in tRNA + guanine. Its pathway is tRNA modification; tRNA-queuosine biosynthesis. Catalyzes the base-exchange of a guanine (G) residue with the queuine precursor 7-aminomethyl-7-deazaguanine (PreQ1) at position 34 (anticodon wobble position) in tRNAs with GU(N) anticodons (tRNA-Asp, -Asn, -His and -Tyr). Catalysis occurs through a double-displacement mechanism. The nucleophile active site attacks the C1' of nucleotide 34 to detach the guanine base from the RNA, forming a covalent enzyme-RNA intermediate. The proton acceptor active site deprotonates the incoming PreQ1, allowing a nucleophilic attack on the C1' of the ribose to form the product. After dissociation, two additional enzymatic reactions on the tRNA convert PreQ1 to queuine (Q), resulting in the hypermodified nucleoside queuosine (7-(((4,5-cis-dihydroxy-2-cyclopenten-1-yl)amino)methyl)-7-deazaguanosine). The polypeptide is Queuine tRNA-ribosyltransferase (Streptococcus pyogenes serotype M3 (strain ATCC BAA-595 / MGAS315)).